Reading from the N-terminus, the 336-residue chain is Transmembrane protease serine 12 (336 aa).

Residues 1 to 18 (MASWALSAALLCLGGAFA) form the signal peptide. The Extracellular segment spans residues 19–312 (YSELHSLSLR…HYLSQGNINR (294 aa)). Residues 66–306 (IIGGSQADTG…FQEWMTHYLS (241 aa)) enclose the Peptidase S1 domain. A disulfide bridge links cysteine 95 with cysteine 111. Catalysis depends on charge relay system residues histidine 110 and aspartate 159. 3 disulfides stabilise this stretch: cysteine 194/cysteine 262, cysteine 225/cysteine 241, and cysteine 252/cysteine 282. Residues asparagine 207, asparagine 237, and asparagine 246 are each glycosylated (N-linked (GlcNAc...) asparagine). Residue serine 256 is the Charge relay system of the active site. The helical transmembrane segment at 313–333 (LFNMDIVLGQVLTALGSVILL) threads the bilayer. Residues 334-336 (GVT) are Cytoplasmic-facing.

The protein belongs to the peptidase S1 family. As to expression, exclusively expressed in the testis, from spermatocytes to elongated spermatids (at protein level).

It is found in the cell membrane. It localises to the cytoplasmic vesicle. The protein resides in the secretory vesicle. Its subcellular location is the acrosome. Required for male fertility. Plays a critical role in sperm capacitation and acrosome reactions during fertilization, and also plays a role in the regulation of proteins involved in spermatogenesis. Regulates protein pathways that promote chromosomal synapsis formation, double-strand break repair, formation of the inner mitochondrial membrane cristae and apoptosis in developing sperm. Required for normal sperm motility and binding to the zona pellucida, potentially via a role in ADAM3 protein maturation. The polypeptide is Transmembrane protease serine 12 (Mus musculus (Mouse)).